We begin with the raw amino-acid sequence, 290 residues long: uncharacterized protein (290 aa).

The protein localises to the cytoplasm. This is an uncharacterized protein from Saccharomyces cerevisiae (strain ATCC 204508 / S288c) (Baker's yeast).